The primary structure comprises 476 residues: Aspartyl/glutamyl-tRNA(Asn/Gln) amidotransferase subunit B (476 aa).

It belongs to the GatB/GatE family. GatB subfamily. As to quaternary structure, heterotrimer of A, B and C subunits.

The enzyme catalyses L-glutamyl-tRNA(Gln) + L-glutamine + ATP + H2O = L-glutaminyl-tRNA(Gln) + L-glutamate + ADP + phosphate + H(+). It carries out the reaction L-aspartyl-tRNA(Asn) + L-glutamine + ATP + H2O = L-asparaginyl-tRNA(Asn) + L-glutamate + ADP + phosphate + 2 H(+). Its function is as follows. Allows the formation of correctly charged Asn-tRNA(Asn) or Gln-tRNA(Gln) through the transamidation of misacylated Asp-tRNA(Asn) or Glu-tRNA(Gln) in organisms which lack either or both of asparaginyl-tRNA or glutaminyl-tRNA synthetases. The reaction takes place in the presence of glutamine and ATP through an activated phospho-Asp-tRNA(Asn) or phospho-Glu-tRNA(Gln). The chain is Aspartyl/glutamyl-tRNA(Asn/Gln) amidotransferase subunit B from Oceanobacillus iheyensis (strain DSM 14371 / CIP 107618 / JCM 11309 / KCTC 3954 / HTE831).